The chain runs to 282 residues: HTH-type transcriptional activator RhaR (282 aa).

The HTH araC/xylS-type domain occupies 179–277; it reads DKLITALANS…GMTPSQWRHL (99 aa). 2 consecutive DNA-binding regions (H-T-H motif) follow at residues 196-217 and 244-267; these read DAFC…RAQT and ISEI…TRET.

In terms of assembly, binds DNA as a dimer.

The protein resides in the cytoplasm. In terms of biological role, activates expression of the rhaSR operon in response to L-rhamnose. In Salmonella schwarzengrund (strain CVM19633), this protein is HTH-type transcriptional activator RhaR.